A 1388-amino-acid polypeptide reads, in one-letter code: DNA-directed RNA polymerase subunit beta'' (1388 aa).

Zn(2+) is bound by residues C224, C294, C301, and C304.

This sequence belongs to the RNA polymerase beta' chain family. RpoC2 subfamily. In terms of assembly, in plastids the minimal PEP RNA polymerase catalytic core is composed of four subunits: alpha, beta, beta', and beta''. When a (nuclear-encoded) sigma factor is associated with the core the holoenzyme is formed, which can initiate transcription. Zn(2+) serves as cofactor.

It is found in the plastid. The protein resides in the chloroplast. It carries out the reaction RNA(n) + a ribonucleoside 5'-triphosphate = RNA(n+1) + diphosphate. DNA-dependent RNA polymerase catalyzes the transcription of DNA into RNA using the four ribonucleoside triphosphates as substrates. In Phalaenopsis aphrodite subsp. formosana (Moth orchid), this protein is DNA-directed RNA polymerase subunit beta''.